The sequence spans 399 residues: Probable aspartate/prephenate aminotransferase (399 aa).

Residues Gly39, Trp125, and Asn175 each contribute to the L-aspartate site. Lys239 carries the post-translational modification N6-(pyridoxal phosphate)lysine. Arg375 contributes to the L-aspartate binding site.

This sequence belongs to the class-I pyridoxal-phosphate-dependent aminotransferase family. As to quaternary structure, homodimer. Pyridoxal 5'-phosphate serves as cofactor.

It localises to the cytoplasm. It carries out the reaction L-aspartate + 2-oxoglutarate = oxaloacetate + L-glutamate. It catalyses the reaction L-arogenate + 2-oxoglutarate = prephenate + L-glutamate. Catalyzes the reversible conversion of aspartate and 2-oxoglutarate to glutamate and oxaloacetate. Can also transaminate prephenate in the presence of glutamate. This chain is Probable aspartate/prephenate aminotransferase (aatA), found in Rickettsia typhi (strain ATCC VR-144 / Wilmington).